We begin with the raw amino-acid sequence, 309 residues long: Protease HtpX homolog (309 aa).

2 helical membrane passes run 7–27 (TTVL…MLGG) and 29–49 (QGMM…YWYS). H131 serves as a coordination point for Zn(2+). The active site involves E132. H135 is a binding site for Zn(2+). 2 helical membrane-spanning segments follow: residues 141–161 (ILIG…ASMA) and 182–202 (IGLI…QMAI). E207 is a Zn(2+) binding site. Residues 278-309 (RHGSDSGTGNRDSSIRRRNMNTEAKAAWDRLR) form a disordered region.

This sequence belongs to the peptidase M48B family. The cofactor is Zn(2+).

The protein resides in the cell inner membrane. In Desulforapulum autotrophicum (strain ATCC 43914 / DSM 3382 / VKM B-1955 / HRM2) (Desulfobacterium autotrophicum), this protein is Protease HtpX homolog.